The sequence spans 313 residues: MVIGNRVLLPLTKRYYNARYRKVLHPELREEIIAHNCYCEEVNSKLHFDDEKIDPGISLKTAVPSYDKHVMLISDINRGMAKKPGVWKNIWESRIENNTTHPYDIISKLNFGPGVLFNAISITSSLESFAPTSLEFYDFLVMPDMRYYRVKKPDIEKFSQYINSGHAVAPKLSFSDYLSGKAAATTVSNNNQITLSLDDSIYYRELKNDAWLFVCGHEKRDMRCGIMGPEILHSVNTANSKPLVNNTGIISHIGGHKFAGNILIYKPIENQNGRKKVDSLWFGKVTPFNVSEIVQSVNEGVIIENNFRGGLSL.

Belongs to the AIM32 family.

In Candida glabrata (strain ATCC 2001 / BCRC 20586 / JCM 3761 / NBRC 0622 / NRRL Y-65 / CBS 138) (Yeast), this protein is Altered inheritance of mitochondria protein 32 (AIM32).